Consider the following 231-residue polypeptide: 2-C-methyl-D-erythritol 4-phosphate cytidylyltransferase (231 aa).

It belongs to the IspD/TarI cytidylyltransferase family. IspD subfamily.

It catalyses the reaction 2-C-methyl-D-erythritol 4-phosphate + CTP + H(+) = 4-CDP-2-C-methyl-D-erythritol + diphosphate. It functions in the pathway isoprenoid biosynthesis; isopentenyl diphosphate biosynthesis via DXP pathway; isopentenyl diphosphate from 1-deoxy-D-xylulose 5-phosphate: step 2/6. Its function is as follows. Catalyzes the formation of 4-diphosphocytidyl-2-C-methyl-D-erythritol from CTP and 2-C-methyl-D-erythritol 4-phosphate (MEP). This Mycobacterium bovis (strain BCG / Pasteur 1173P2) protein is 2-C-methyl-D-erythritol 4-phosphate cytidylyltransferase.